Reading from the N-terminus, the 257-residue chain is UPF0246 protein BT_3869 (257 aa).

This sequence belongs to the UPF0246 family.

The sequence is that of UPF0246 protein BT_3869 from Bacteroides thetaiotaomicron (strain ATCC 29148 / DSM 2079 / JCM 5827 / CCUG 10774 / NCTC 10582 / VPI-5482 / E50).